Here is a 201-residue protein sequence, read N- to C-terminus: MEKFTKLTGVAAPMPVVNIDTDMIIPKDYLKTIKRTGLGKGLFAESRYLEDGSPNPDFVLNKPAYQNAQILVAGDNFGCGSSREHAPWALLDFGIRCVISTSFADIFYNNCFKNGILPVVVSPENLEKLLDDASRGSNAVLSIDLERQEISGPDGGTITFEIDEFKRHCMLNGLDDIGLTLEHAGAIDTFEKANASVRPWA.

Belongs to the LeuD family. LeuD type 1 subfamily. Heterodimer of LeuC and LeuD.

It catalyses the reaction (2R,3S)-3-isopropylmalate = (2S)-2-isopropylmalate. It functions in the pathway amino-acid biosynthesis; L-leucine biosynthesis; L-leucine from 3-methyl-2-oxobutanoate: step 2/4. Catalyzes the isomerization between 2-isopropylmalate and 3-isopropylmalate, via the formation of 2-isopropylmaleate. The polypeptide is 3-isopropylmalate dehydratase small subunit (Agrobacterium fabrum (strain C58 / ATCC 33970) (Agrobacterium tumefaciens (strain C58))).